We begin with the raw amino-acid sequence, 434 residues long: Meiosis-specific kinetochore protein (434 aa).

2 disordered regions span residues 1-102 and 249-289; these read MDKI…PCET and VFAE…PDNK. Residues 46–62 show a composition bias toward basic and acidic residues; that stretch reads KGKEQGLRKITEKKELS. The span at 64–76 shows a compositional bias: polar residues; that stretch reads LTGSSSQRPSLLS. The short motif at 334 to 336 is the POLO box domain (PBD)-binding element; that stretch reads STP. A required for localization to kinetochores region spans residues 391 to 394; it reads EICC. Residues 404–424 are disordered; it reads QMRRKDPAVKNRCSPPKDVPL.

In terms of assembly, interacts with CENPC. Interacts with PLK1; required for recruitment of PLK1 at kinetochores. Germ cell-specific. Expressed in both testis and ovary. Not expressed in other tissues.

It localises to the chromosome. It is found in the centromere. Its subcellular location is the kinetochore. Key regulator of kinetochore function during meiosis I: required both for mono-orientation of kinetochores on sister chromosomes and protection of centromeric cohesin from separase-mediated cleavage. Acts by facilitating kinetochore mono-orientation during meiosis I, when kinetochores on sister chromosomes face the same direction and are thus captured and pulled by spindle fibers from the same pole. Also required to prevent cleavage of cohesin at centromeres during meiosis I, possibly by acting as a regulator of the shugoshin-dependent protection pathway. Acts in collaboration with PLK1: required for PLK1 enrichment to kinetochores. Not required during meiosis II or mitosis. The polypeptide is Meiosis-specific kinetochore protein (Mus musculus (Mouse)).